The chain runs to 108 residues: Putative DNA-directed RNA polymerase subunit 1 inactive homolog (108 aa).

In Acanthamoeba polyphaga (Amoeba), this protein is Putative DNA-directed RNA polymerase subunit 1 inactive homolog.